The sequence spans 312 residues: Aspartate carbamoyltransferase catalytic subunit (312 aa).

Residues Arg58 and Thr59 each contribute to the carbamoyl phosphate site. Lys86 contacts L-aspartate. Carbamoyl phosphate is bound by residues Arg108, His136, and Gln139. L-aspartate-binding residues include Arg169 and Arg223. The carbamoyl phosphate site is built by Gly264 and Pro265.

It belongs to the aspartate/ornithine carbamoyltransferase superfamily. ATCase family. As to quaternary structure, heterododecamer (2C3:3R2) of six catalytic PyrB chains organized as two trimers (C3), and six regulatory PyrI chains organized as three dimers (R2).

The enzyme catalyses carbamoyl phosphate + L-aspartate = N-carbamoyl-L-aspartate + phosphate + H(+). It functions in the pathway pyrimidine metabolism; UMP biosynthesis via de novo pathway; (S)-dihydroorotate from bicarbonate: step 2/3. In terms of biological role, catalyzes the condensation of carbamoyl phosphate and aspartate to form carbamoyl aspartate and inorganic phosphate, the committed step in the de novo pyrimidine nucleotide biosynthesis pathway. The polypeptide is Aspartate carbamoyltransferase catalytic subunit (Desulforapulum autotrophicum (strain ATCC 43914 / DSM 3382 / VKM B-1955 / HRM2) (Desulfobacterium autotrophicum)).